Reading from the N-terminus, the 364-residue chain is GMP reductase (364 aa).

NADP(+) contacts are provided by residues 26–27, lysine 78, 132–134, and 183–184; these read SR, DVA, and IG. K(+) is bound by residues glycine 184, glycine 186, and cysteine 189. Cysteine 189 (thioimidate intermediate) is an active-site residue. Threonine 191 (proton donor/acceptor) is an active-site residue. Arginine 192 serves as a coordination point for K(+). GMP contacts are provided by residues 222–224, 245–246, 271–273, and 289–293; these read DGG, GG, GMS, and RASEG. NADP(+) is bound by residues methionine 272, 288 to 289, and 317 to 320; these read YR and SACT.

It belongs to the IMPDH/GMPR family. GuaC type 1 subfamily. In terms of assembly, homotetramer.

The enzyme catalyses IMP + NH4(+) + NADP(+) = GMP + NADPH + 2 H(+). In terms of biological role, catalyzes the irreversible NADPH-dependent deamination of GMP to IMP. It functions in the conversion of nucleobase, nucleoside and nucleotide derivatives of G to A nucleotides, and in maintaining the intracellular balance of A and G nucleotides. The protein is GMP reductase (gmr-1) of Onchocerca volvulus.